We begin with the raw amino-acid sequence, 514 residues long: Polygalacturonase (514 aa).

Positions 1 to 22 (MAMKFIAPMAFVAMQLIIMAAA) are cleaved as a signal peptide. Residues 23–45 (EDQSAQIMLDSDIEQYLRSNRSL) constitute a propeptide that is removed on maturation. PbH1 repeat units lie at residues 214–240 (CEGV…DIFA), 241–262 (SKNF…AIGT), 264–284 (SSNI…SIGS), 294–315 (VSYV…RIKT), and 323–344 (ASHI…LINQ). Asp255 functions as the Proton donor in the catalytic mechanism. His278 is an active-site residue. A propeptide spanning residues 434-514 (AKRKESKSHK…CSRHGKIYHP (81 aa)) is cleaved from the precursor. N-linked (GlcNAc...) asparagine glycans are attached at residues Asn460 and Asn472.

Belongs to the glycosyl hydrolase 28 family.

Its subcellular location is the secreted. It is found in the plastid. It localises to the amyloplast. The protein resides in the cell wall. It carries out the reaction (1,4-alpha-D-galacturonosyl)n+m + H2O = (1,4-alpha-D-galacturonosyl)n + (1,4-alpha-D-galacturonosyl)m.. In Cryptomeria japonica (Japanese cedar), this protein is Polygalacturonase.